Here is a 346-residue protein sequence, read N- to C-terminus: Peripherin-2 (346 aa).

Residues 1 to 24 (MALMKTKFNLKRRVKLAQGLWLMN) lie on the Cytoplasmic side of the membrane. Residues 25-43 (WCCVLAGIALFSMGVFLKI) form a helical membrane-spanning segment. Residues 44–61 (ELRKRSEVMDNDESHFVP) lie on the Lumenal side of the membrane. The helical transmembrane segment at 62–80 (NSLILMGSLACALNAFPGK) threads the bilayer. Residues 81–99 (ICYDSLDPTKFPRWKPMLK) lie on the Cytoplasmic side of the membrane. A helical membrane pass occupies residues 100–123 (PYLIICLIFNIFIFFTGVVCFLTR). Over 124-264 (GSLESTLAHG…LNYYTSMMSS (141 aa)) the chain is Lumenal. N-linked (GlcNAc...) asparagine glycosylation is present at asparagine 229. Residues 265–290 (MGGMVFLVWIMEMAVMIGLRFLHTCL) form a helical membrane-spanning segment. The Cytoplasmic segment spans residues 291–346 (ETIANPEDPECESEGWILEKSLKDTIKSSWELVKSMGKLNKVETAGGEEAGVATVS).

The protein belongs to the PRPH2/ROM1 family. Homodimer; disulfide-linked. Found in both rod and cone photoreceptors. Specifically in the rims and incisures of rod and cone outer segment disks.

The protein localises to the membrane. Its function is as follows. May be involved in the morphogenesis of retina outer segment disks and the development and maintenance of the retina ultrastructure. The sequence is that of Peripherin-2 (prph2) from Xenopus laevis (African clawed frog).